We begin with the raw amino-acid sequence, 527 residues long: Probable T-complex protein 1 subunit beta (527 aa).

Belongs to the TCP-1 chaperonin family. Heterooligomeric complex of about 850 to 900 kDa that forms two stacked rings, 12 to 16 nm in diameter.

It is found in the cytoplasm. In terms of biological role, molecular chaperone; assists the folding of proteins upon ATP hydrolysis. Known to play a role, in vitro, in the folding of actin and tubulin. In Schizosaccharomyces pombe (strain 972 / ATCC 24843) (Fission yeast), this protein is Probable T-complex protein 1 subunit beta (cct2).